Here is a 972-residue protein sequence, read N- to C-terminus: 116 kDa U5 small nuclear ribonucleoprotein component (972 aa).

Residues 1 to 53 (MDTDLYDEFGNYIGPELDSDDEDDELGRESKELDELEDDDDDDDMGDHDEDHP) form a disordered region. Acidic residues-rich tracts occupy residues 17 to 26 (LDSDDEDDEL) and 34 to 48 (DELE…MGDH). A tr-type G domain is found at 127-409 (ELIRNVTLCG…GIHLTKEELK (283 aa)). GTP is bound by residues 136–143 (GHLHHGKT), 204–208 (DTPGH), and 258–261 (NKID).

Belongs to the TRAFAC class translation factor GTPase superfamily. Classic translation factor GTPase family. EF-G/EF-2 subfamily. As to quaternary structure, component of the U5 snRNP and the U4/U6-U5 tri-snRNP complex, a building block of the spliceosome. Component of the pre-catalytic, catalytic and post-catalytic spliceosome complexes. Component of the minor spliceosome, which splices U12-type introns.

It is found in the nucleus. Required for pre-mRNA splicing as component of the spliceosome, including pre-catalytic, catalytic and post-catalytic spliceosomal complexes. Component of the U5 snRNP and the U4/U6-U5 tri-snRNP complex, a building block of the spliceosome. As a component of the minor spliceosome, involved in the splicing of U12-type introns in pre-mRNAs. This is 116 kDa U5 small nuclear ribonucleoprotein component (EFTUD2) from Gallus gallus (Chicken).